The following is a 408-amino-acid chain: Two-pore potassium channel 5 (408 aa).

Disordered stretches follow at residues 1 to 29 (MEPLISPQPRFRLQPIPENPSSSSSSASI) and 58 to 82 (QSVQDDKEDQDSDSDETNRFLSQTR). Residues 15 to 29 (PIPENPSSSSSSASI) are compositionally biased toward low complexity. Residues 22–115 (SSSSSASITI…TKKPSPVSKS (94 aa)) lie on the Stromal side of the membrane. Residues 63–72 (DKEDQDSDSD) are compositionally biased toward acidic residues. A helical membrane pass occupies residues 116-136 (IIRQAIFLLIVYLTLGVSIYS). Residues 152 to 171 (DALYFCIVTMCTIGYGDIAP) constitute an intramembrane region (pore-forming). The chain crosses the membrane as a helical span at residues 178-198 (IFAVVFVLFGFGFLDILLSGV). At 199–248 (VNYVLDLQESMILTGIQTRQHHQHHHHHRFSAKDYIIDFEKGRMRIRMKV) the chain is on the stromal side. The helical transmembrane segment at 249–269 (CLALCVVVLCIGVGALVLHFV) threads the bilayer. Positions 276-295 (DSVYLSVMSVTTVGYGDRAF) form an intramembrane region, pore-forming. Residues 302 to 322 (LFAAVWLLVSTLAVARAFLYL) form a helical membrane-spanning segment. At 323–408 (AEARIDRRHR…TLPDLLGDPL (86 aa)) the chain is on the stromal side. EF-hand domains are found at residues 339–374 (LNREITVDDLLKADTYQHGFISKSEYIVLKLKEMGK) and 378–408 (KDIDQVVIQFEKLDPNQIGKITLPDLLGDPL). Ca(2+) is bound by residues Asp-352, Glu-363, Asp-391, Asn-393, Lys-397, and Asp-402.

Belongs to the two pore domain potassium channel (TC 1.A.1.7) family. In terms of assembly, homodimer. As to expression, expressed in hydathodes and the vascular tissues of roots, stems, leaves and flowers.

The protein resides in the vacuole membrane. Functionally, probable voltage-independent potassium-selective tonoplast ion channel. The sequence is that of Two-pore potassium channel 5 (TPK5) from Arabidopsis thaliana (Mouse-ear cress).